The following is a 97-amino-acid chain: Co-chaperonin GroES (97 aa).

This sequence belongs to the GroES chaperonin family. In terms of assembly, heptamer of 7 subunits arranged in a ring. Interacts with the chaperonin GroEL.

The protein localises to the cytoplasm. Functionally, together with the chaperonin GroEL, plays an essential role in assisting protein folding. The GroEL-GroES system forms a nano-cage that allows encapsulation of the non-native substrate proteins and provides a physical environment optimized to promote and accelerate protein folding. GroES binds to the apical surface of the GroEL ring, thereby capping the opening of the GroEL channel. The polypeptide is Co-chaperonin GroES (Wigglesworthia glossinidia brevipalpis).